Consider the following 176-residue polypeptide: O-acetyl-ADP-ribose deacetylase (176 aa).

A Macro domain is found at 1–175 (MSGRINVVQG…LYQRLLGQYD (175 aa)). Residues 11 to 12 (DI), N25, 33 to 35 (GVD), and 122 to 126 (STGIY) each bind substrate. The active-site Proton acceptor is the D35.

This sequence belongs to the MacroD-type family. YmdB subfamily. In terms of assembly, homodimer. Interacts with RNase III.

It catalyses the reaction 3''-O-acetyl-ADP-D-ribose + H2O = ADP-D-ribose + acetate + H(+). It carries out the reaction 2''-O-acetyl-ADP-D-ribose + H2O = ADP-D-ribose + acetate + H(+). Deacetylates O-acetyl-ADP ribose to yield ADP-ribose and free acetate. Down-regulates ribonuclease 3 (RNase III) activity. Acts by interacting directly with the region of the ribonuclease that is required for dimerization/activation. The chain is O-acetyl-ADP-ribose deacetylase from Cronobacter turicensis (strain DSM 18703 / CCUG 55852 / LMG 23827 / z3032).